A 224-amino-acid polypeptide reads, in one-letter code: Putative adhesin A1G_07050 (224 aa).

An N-terminal signal peptide occupies residues 1–22 (MKKLLLIAATSATILSSSVSFA).

In Rickettsia rickettsii (strain Sheila Smith), this protein is Putative adhesin A1G_07050.